The following is a 152-amino-acid chain: SsrA-binding protein (152 aa).

This sequence belongs to the SmpB family.

It localises to the cytoplasm. Functionally, required for rescue of stalled ribosomes mediated by trans-translation. Binds to transfer-messenger RNA (tmRNA), required for stable association of tmRNA with ribosomes. tmRNA and SmpB together mimic tRNA shape, replacing the anticodon stem-loop with SmpB. tmRNA is encoded by the ssrA gene; the 2 termini fold to resemble tRNA(Ala) and it encodes a 'tag peptide', a short internal open reading frame. During trans-translation Ala-aminoacylated tmRNA acts like a tRNA, entering the A-site of stalled ribosomes, displacing the stalled mRNA. The ribosome then switches to translate the ORF on the tmRNA; the nascent peptide is terminated with the 'tag peptide' encoded by the tmRNA and targeted for degradation. The ribosome is freed to recommence translation, which seems to be the essential function of trans-translation. This Rickettsia conorii (strain ATCC VR-613 / Malish 7) protein is SsrA-binding protein.